A 667-amino-acid polypeptide reads, in one-letter code: Probable E3 ubiquitin-protein ligase HIP1 (667 aa).

Disordered stretches follow at residues 142–163 (NGASQGSELHGGCSHTGSNGQA) and 285–311 (TTAGLSSSSYDPSGGNNNSGGSQRSFR). Residues 288 to 309 (GLSSSSYDPSGGNNNSGGSQRS) are compositionally biased toward low complexity. An RING-type; atypical zinc finger spans residues 620–661 (CCICQEEYVDGDDLGTLDCGHDFHVGCVRQWLVVKNTCPICK).

The protein belongs to the RING-type zinc finger family. Interacts with HAL3.

It catalyses the reaction S-ubiquitinyl-[E2 ubiquitin-conjugating enzyme]-L-cysteine + [acceptor protein]-L-lysine = [E2 ubiquitin-conjugating enzyme]-L-cysteine + N(6)-ubiquitinyl-[acceptor protein]-L-lysine.. Its pathway is protein modification; protein ubiquitination. In terms of biological role, probable E3 ubiquitin-protein ligase that functions downstream of HAL3 and is required for HAL3-regulated plant growth. Activation of HIP1 by HAL3 may lead to the degradation of cell cycle suppressors, resulting in enhancement of cell division and plant growth. The protein is Probable E3 ubiquitin-protein ligase HIP1 (HIP1) of Oryza sativa subsp. japonica (Rice).